Reading from the N-terminus, the 300-residue chain is Protein YIF1B (300 aa).

The disordered stretch occupies residues 1 to 46; that stretch reads MNQESSFRAPPKRRVRGPNPNISTPHQLFDDTSGGPVPHGGEYPNH. At 1–142 the chain is on the cytoplasmic side; the sequence is MNQESSFRAP…APRFDINAPD (142 aa). The chain crosses the membrane as a helical span at residues 143 to 163; it reads LYIPVMAFITYILVAGLALGT. The Extracellular portion of the chain corresponds to 164-178; sequence QSRFSPEILGMQASS. The helical transmembrane segment at 179 to 199 threads the bilayer; it reads ALAWLIVEVLAILLSLYLVTV. Topologically, residues 200 to 205 are cytoplasmic; that stretch reads NTDLTT. A helical transmembrane segment spans residues 206–226; it reads VDLVAFSGYKYVGMISGVISG. Residue Leu227 is a topological domain, extracellular. The helical transmembrane segment at 228–248 threads the bilayer; that stretch reads LFGKTGYYVVLSWCGISVVFF. Residues 249–278 are Cytoplasmic-facing; it reads MIRTLRLKILSEAAAEGVLVRGARNQLRMY. Residues 279 to 299 traverse the membrane as a helical segment; it reads LTMAIAAVQPIFMYWLTYHLV. Residue Arg300 is a topological domain, extracellular.

This sequence belongs to the YIF1 family.

It localises to the endoplasmic reticulum membrane. Its subcellular location is the golgi apparatus membrane. The protein localises to the endoplasmic reticulum-Golgi intermediate compartment membrane. In terms of biological role, functions in endoplasmic reticulum to Golgi vesicle-mediated transport and regulates the proper organization of the endoplasmic reticulum and the Golgi. Plays a key role in targeting to neuronal dendrites receptors such as HTR1A. Plays also a role in primary cilium and sperm flagellum assembly probably through protein transport to these compartments. The chain is Protein YIF1B (yif1b) from Xenopus tropicalis (Western clawed frog).